The following is a 512-amino-acid chain: Oxalate--CoA ligase (512 aa).

168–179 (HTSGTTGRPKVV) serves as a coordination point for ATP. Phosphoserine is present on residues Ser283 and Ser284. The FACS signature appears at 381 to 429 (DRFFRTGDEGKLDKDGYVFITGRIKELVNRGGEKISPAEIDAVLMQHPD). Positions 510 to 512 (AKL) match the Microbody targeting signal motif.

It belongs to the ATP-dependent AMP-binding enzyme family.

The protein resides in the peroxisome matrix. Its subcellular location is the peroxisome membrane. The catalysed reaction is oxalate + ATP + CoA = oxalyl-CoA + AMP + diphosphate. Its function is as follows. Catalyzes the first step in a degradation pathway of oxalate to CO(2) to protect the cell against the harmful effects of oxalate derived from endogenous processes or an environmental sources. The protein is Oxalate--CoA ligase (pcs60) of Schizosaccharomyces pombe (strain 972 / ATCC 24843) (Fission yeast).